Reading from the N-terminus, the 944-residue chain is Leucine--tRNA ligase 2 (944 aa).

Residues 36-46 carry the 'HIGH' region motif; the sequence is PYPNSPWHIGH. The short motif at 623 to 627 is the 'KMSKS' region element; it reads KMSKS. K626 lines the ATP pocket.

It belongs to the class-I aminoacyl-tRNA synthetase family.

The protein localises to the cytoplasm. It catalyses the reaction tRNA(Leu) + L-leucine + ATP = L-leucyl-tRNA(Leu) + AMP + diphosphate. The sequence is that of Leucine--tRNA ligase 2 from Saccharolobus solfataricus (strain ATCC 35092 / DSM 1617 / JCM 11322 / P2) (Sulfolobus solfataricus).